Reading from the N-terminus, the 189-residue chain is Potassium-transporting ATPase KdpC subunit (189 aa).

Residues 11–31 (LFVLLTVITGVLYPVFVTGLA) form a helical membrane-spanning segment.

This sequence belongs to the KdpC family. In terms of assembly, the system is composed of three essential subunits: KdpA, KdpB and KdpC.

The protein localises to the cell inner membrane. Part of the high-affinity ATP-driven potassium transport (or Kdp) system, which catalyzes the hydrolysis of ATP coupled with the electrogenic transport of potassium into the cytoplasm. This subunit acts as a catalytic chaperone that increases the ATP-binding affinity of the ATP-hydrolyzing subunit KdpB by the formation of a transient KdpB/KdpC/ATP ternary complex. The protein is Potassium-transporting ATPase KdpC subunit of Polynucleobacter asymbioticus (strain DSM 18221 / CIP 109841 / QLW-P1DMWA-1) (Polynucleobacter necessarius subsp. asymbioticus).